A 146-amino-acid chain; its full sequence is MAGDSDNVSLPKATVQKMISEILDQDLMFTKDAREIIINSGIEFIMILSSMASEMADNEAKKTIAPEHVIKALEELEYNEFIPFLEEILLNFKGSQKVKETRDSKFKKSGLSEEELLRQQEELFRQSRSRLHHNSVSDPVKSEDSS.

A disordered region spans residues 124-146; sequence FRQSRSRLHHNSVSDPVKSEDSS. Phosphoserine occurs at positions 135, 137, and 142.

Component of the NC2 (negative cofactor 2) complex composed of BUR6 and NCB2. The NC2 complex associates with SPT15/TBP. Interacts with SPT15/TBP.

It localises to the nucleus. In terms of biological role, component of the NC2 complex which represses RNA polymerase II transcription through binding to SPT15/TBP and thereby inhibiting the assembly of the preinitiation complex. The NC2 complex may also mediate transcriptional activation from TATA-driven promoters through association with SPT15/TBP. The protein is Negative cofactor 2 complex subunit beta (NCB2) of Saccharomyces cerevisiae (strain ATCC 204508 / S288c) (Baker's yeast).